The chain runs to 734 residues: Photosystem I P700 chlorophyll a apoprotein A2 (734 aa).

A run of 8 helical transmembrane segments spans residues 46 to 69 (IFASHFGQLAIIFLWTSGNLFHVA), 135 to 158 (LYTGAIFLLILSTISLIAGWLHLQ), 175 to 199 (LNHHLSGLFGVSSLAWTGHLVHVAI), 273 to 291 (IAHHHLAIAFIFLVAGHMY), 330 to 353 (IHFQLGLALASLGVITSLVAQHMY), 369 to 395 (AALYTHHQYIAGFIMTGAFAHGAIFFI), 417 to 439 (AIISHLSWASLFLGFHTLGLYVH), and 517 to 535 (FLVHHAIALGLHTTTLILV). Residues C559 and C568 each coordinate [4Fe-4S] cluster. The next 2 helical transmembrane spans lie at 575-596 (AFYLAVFWMLNTIGWVTFYWHW) and 643-665 (LSVWAWMFLFGHLVWATGFMFLI). Chlorophyll a-binding residues include H654, M662, and Y670. Residue W671 coordinates phylloquinone. A helical transmembrane segment spans residues 707-727 (LVGLAHFSVGYIFTYAAFLIA).

This sequence belongs to the PsaA/PsaB family. In terms of assembly, the PsaA/B heterodimer binds the P700 chlorophyll special pair and subsequent electron acceptors. PSI consists of a core antenna complex that captures photons, and an electron transfer chain that converts photonic excitation into a charge separation. The eukaryotic PSI reaction center is composed of at least 11 subunits. Requires P700 is a chlorophyll a/chlorophyll a' dimer, A0 is one or more chlorophyll a, A1 is one or both phylloquinones and FX is a shared 4Fe-4S iron-sulfur center. as cofactor.

The protein resides in the plastid. Its subcellular location is the chloroplast thylakoid membrane. The catalysed reaction is reduced [plastocyanin] + hnu + oxidized [2Fe-2S]-[ferredoxin] = oxidized [plastocyanin] + reduced [2Fe-2S]-[ferredoxin]. In terms of biological role, psaA and PsaB bind P700, the primary electron donor of photosystem I (PSI), as well as the electron acceptors A0, A1 and FX. PSI is a plastocyanin-ferredoxin oxidoreductase, converting photonic excitation into a charge separation, which transfers an electron from the donor P700 chlorophyll pair to the spectroscopically characterized acceptors A0, A1, FX, FA and FB in turn. Oxidized P700 is reduced on the lumenal side of the thylakoid membrane by plastocyanin. In Phaseolus vulgaris (Kidney bean), this protein is Photosystem I P700 chlorophyll a apoprotein A2.